The following is a 198-amino-acid chain: Acyl carrier protein phosphodiesterase (198 aa).

It belongs to the AcpH family.

The enzyme catalyses holo-[ACP] + H2O = apo-[ACP] + (R)-4'-phosphopantetheine + H(+). Functionally, converts holo-ACP to apo-ACP by hydrolytic cleavage of the phosphopantetheine prosthetic group from ACP. In Photorhabdus laumondii subsp. laumondii (strain DSM 15139 / CIP 105565 / TT01) (Photorhabdus luminescens subsp. laumondii), this protein is Acyl carrier protein phosphodiesterase.